The sequence spans 243 residues: MRNDLETLKHIIDSSNRITFFTGAGVSVASGVPDFRSMGGLFDEISKDGLSPEYLLSRDYLEDDPEGFINFCHKRLLFVDTKPNIVHDWIAKLERNQQSLGVITQNIDGLHSDAGSQHVDELHGTLNRFYCNACHKSYTKSDVIDRTLKHCDNCGGAIRPDIVLYGEMLDQPTIIRALNKIEHADTLVVLGSSLVVQPAAGLISHFKGDNLIIINKDRTPYDSDATLVIHDDMVSVVKSLMTE.

Positions 1-243 constitute a Deacetylase sirtuin-type domain; sequence MRNDLETLKH…VSVVKSLMTE (243 aa). Ala24, Phe35, Arg36, Gln105, Ile107, Asp108, and His123 together coordinate NAD(+). Position 35 (Phe35) interacts with nicotinamide. Ile107 and Asp108 together coordinate nicotinamide. His123 acts as the Proton acceptor in catalysis. Zn(2+)-binding residues include Cys131, Cys134, Cys151, and Cys154. NAD(+)-binding residues include Ser192, Ser193, Asn215, and Asp232.

This sequence belongs to the sirtuin family. Class U subfamily. Zn(2+) is required as a cofactor.

The protein resides in the cytoplasm. The catalysed reaction is N(6)-acetyl-L-lysyl-[protein] + NAD(+) + H2O = 2''-O-acetyl-ADP-D-ribose + nicotinamide + L-lysyl-[protein]. Functionally, NAD-dependent protein deacetylase which modulates the activities of several enzymes which are inactive in their acetylated form. This chain is NAD-dependent protein deacetylase, found in Staphylococcus aureus (strain Mu50 / ATCC 700699).